Here is a 355-residue protein sequence, read N- to C-terminus: MNQPKSAPNSPDSAQGLSYRDAGVDIDAGDALVDAIKPFARKTLRDGVLGGIGGFGALFEVPKKYKEPVLVSGTDGVGTKLKLAFTLNRHDTVGQDLVAMSVNDILVQGAEPLFFLDYFACGKLDVGTAATVVKGIAQGCELAGCALIGGETAEMPGMYPDGEYDLAGFAVGAVEKSKIIDGSKIVPGDVVLGLASSGIHSNGYSLVRKIIERAQPDLDADFDGRTLAEALMAPTHIYVKPLLALMQQLEVKGMAHITGGGLVENIPRVLREGLTAELDHRAWPLPPLFAWLQKHGGVADAEMHRVFNCGIGMVVIVSAADADAATGLLAAAGEQVWKIGTVRQSKEGEAQTVVV.

It belongs to the AIR synthase family.

It is found in the cytoplasm. The enzyme catalyses 2-formamido-N(1)-(5-O-phospho-beta-D-ribosyl)acetamidine + ATP = 5-amino-1-(5-phospho-beta-D-ribosyl)imidazole + ADP + phosphate + H(+). The protein operates within purine metabolism; IMP biosynthesis via de novo pathway; 5-amino-1-(5-phospho-D-ribosyl)imidazole from N(2)-formyl-N(1)-(5-phospho-D-ribosyl)glycinamide: step 2/2. In Paraburkholderia phymatum (strain DSM 17167 / CIP 108236 / LMG 21445 / STM815) (Burkholderia phymatum), this protein is Phosphoribosylformylglycinamidine cyclo-ligase.